A 287-amino-acid polypeptide reads, in one-letter code: ATP synthase gamma chain (287 aa).

Belongs to the ATPase gamma chain family. F-type ATPases have 2 components, CF(1) - the catalytic core - and CF(0) - the membrane proton channel. CF(1) has five subunits: alpha(3), beta(3), gamma(1), delta(1), epsilon(1). CF(0) has three main subunits: a, b and c.

The protein localises to the cell inner membrane. Functionally, produces ATP from ADP in the presence of a proton gradient across the membrane. The gamma chain is believed to be important in regulating ATPase activity and the flow of protons through the CF(0) complex. The sequence is that of ATP synthase gamma chain from Colwellia psychrerythraea (strain 34H / ATCC BAA-681) (Vibrio psychroerythus).